Here is a 416-residue protein sequence, read N- to C-terminus: Enolase (416 aa).

Glutamine 160 is a binding site for (2R)-2-phosphoglycerate. The Proton donor role is filled by glutamate 204. 3 residues coordinate Mg(2+): aspartate 239, glutamate 280, and aspartate 306. (2R)-2-phosphoglycerate contacts are provided by lysine 331, arginine 360, serine 361, and lysine 382. Lysine 331 serves as the catalytic Proton acceptor.

The protein belongs to the enolase family. Mg(2+) is required as a cofactor.

It localises to the cytoplasm. Its subcellular location is the secreted. The protein localises to the cell surface. It carries out the reaction (2R)-2-phosphoglycerate = phosphoenolpyruvate + H2O. The protein operates within carbohydrate degradation; glycolysis; pyruvate from D-glyceraldehyde 3-phosphate: step 4/5. Catalyzes the reversible conversion of 2-phosphoglycerate (2-PG) into phosphoenolpyruvate (PEP). It is essential for the degradation of carbohydrates via glycolysis. The polypeptide is Enolase (Sulfolobus acidocaldarius (strain ATCC 33909 / DSM 639 / JCM 8929 / NBRC 15157 / NCIMB 11770)).